The following is a 92-amino-acid chain: RQC P-site tRNA stabilizing factor (92 aa).

The region spanning 5-65 (MRLDKYLKVS…GPKIVTAKIE (61 aa)) is the S4 RNA-binding domain.

Belongs to the RqcP family. In terms of assembly, associates with stalled 50S ribosomal subunits. Binds to RqcH, 23S rRNA and the P-site tRNA. Does not require RqcH for association with 50S subunits.

Key component of the ribosome quality control system (RQC), a ribosome-associated complex that mediates the extraction of incompletely synthesized nascent chains from stalled ribosomes and their subsequent degradation. RqcH recruits Ala-charged tRNA, and with RqcP directs the elongation of stalled nascent chains on 50S ribosomal subunits, leading to non-templated C-terminal alanine extensions (Ala tail). The Ala tail promotes nascent chain degradation. RqcP is associated with the translocation-like movement of the peptidyl-tRNA from the A-site into the P-site. The sequence is that of RQC P-site tRNA stabilizing factor from Listeria monocytogenes serovar 1/2a (strain ATCC BAA-679 / EGD-e).